A 479-amino-acid chain; its full sequence is Adenylate kinase 8 (479 aa).

2 adenylate kinase regions span residues 58–258 (PKVV…TYVQ) and 269–471 (PKVL…SGII). 67–72 (ASGKTT) is an ATP binding site. The tract at residues 87 to 113 (TKESLLEREFSRLSVEAKSYYQVYKKI) is NMP 1. AMP is bound by residues 140 to 143 (GIPE), Gln-147, and Arg-203. Residues 177-206 (GKRIDPVTGEIYHTTFDWPPEPEIQNRLRQ) are LID 1. Position 278-283 (278-283 (GSGKRL)) interacts with ATP. Positions 298-327 (SCGQLLKEAVAAKSSFGELIQPFFEKRMTV) are NMP 2. AMP is bound by residues 325–327 (MTV), 354–357 (GFPR), and Gln-361. An LID 2 region spans residues 391–424 (LRRTDPVTGERFHLMYKPPPTIEVQVRLLQNPKD). ATP is bound at residue Arg-392.

It belongs to the adenylate kinase family. As to quaternary structure, interacts with CFAP45 and CFAP52; CFAP45 and AK8 dimerization may create a cavity at the interface of the dimer that can accommodate AMP.

The protein localises to the cytoplasm. It is found in the cytosol. The protein resides in the cytoskeleton. It localises to the cilium axoneme. It carries out the reaction AMP + ATP = 2 ADP. The catalysed reaction is a 2'-deoxyribonucleoside 5'-diphosphate + ATP = a 2'-deoxyribonucleoside 5'-triphosphate + ADP. The enzyme catalyses a ribonucleoside 5'-diphosphate + ATP = a ribonucleoside 5'-triphosphate + ADP. Functionally, nucleoside monophosphate (NMP) kinase that catalyzes the reversible transfer of the terminal phosphate group between nucleoside triphosphates and monophosphates. Has highest activity toward AMP, and weaker activity toward dAMP, CMP and dCMP. Also displays broad nucleoside diphosphate kinase activity. This Mus musculus (Mouse) protein is Adenylate kinase 8 (Ak8).